We begin with the raw amino-acid sequence, 503 residues long: MEFSVKSGSPEKQRSACIVVGVFEPRRLSPIAEQLDKISDGYISALLRRGELEGKVGQSLLLHHVPNILSERILLIGCGKERELDERQYKQVIQKTINALNETGSMEAVCFLTELHVKGRNTYWKVRQAVETAKETLYTFDQLKSNKVELRRPLRKMVFNVPTRRELTSGERAIQHGLAIAAGIKAAKDLGNMPPNICNAAYLASQARQLADTYSQNTITRVIGEEQMKELGMNAYLAVGQGSQNESLMSVIEYKGDPNPENRPIVLVGKGLTFDSGGISIKPADSMDEMKYDMCGAATVYGVMRMAAELALPLNIIGVLAGCENMVDGRAYRPGDVLTTMSGQTVEVLNTDAEGRLVLCDTLTYVERYEPDVVIDVATLTGACVIALGHHITGLMANHNPLAHELLSASEQSGDRAWRLPLTDEFQEQLESNFADMANIGGRPGGAITAGCFLSRFTRKYSWAHLDIAGTAWRSGKAKGATGRPVALLSQFLLNRAGQNDVE.

Mn(2+) is bound by residues K270 and D275. K282 is an active-site residue. Residues D293, D352, and E354 each contribute to the Mn(2+) site. The active site involves R356.

This sequence belongs to the peptidase M17 family. Requires Mn(2+) as cofactor.

It localises to the cytoplasm. It catalyses the reaction Release of an N-terminal amino acid, Xaa-|-Yaa-, in which Xaa is preferably Leu, but may be other amino acids including Pro although not Arg or Lys, and Yaa may be Pro. Amino acid amides and methyl esters are also readily hydrolyzed, but rates on arylamides are exceedingly low.. The enzyme catalyses Release of an N-terminal amino acid, preferentially leucine, but not glutamic or aspartic acids.. Functionally, presumably involved in the processing and regular turnover of intracellular proteins. Catalyzes the removal of unsubstituted N-terminal amino acids from various peptides. The sequence is that of Probable cytosol aminopeptidase from Pectobacterium atrosepticum (strain SCRI 1043 / ATCC BAA-672) (Erwinia carotovora subsp. atroseptica).